Consider the following 396-residue polypeptide: Elongation factor Tu (396 aa).

In terms of domain architecture, tr-type G spans 10-205 (KSHANIGTIG…AVDEYIPTPE (196 aa)). The G1 stretch occupies residues 19–26 (GHVDHGKT). 19–26 (GHVDHGKT) contacts GTP. Residue Thr-26 participates in Mg(2+) binding. Residues 61 to 65 (GITIS) form a G2 region. Residues 82–85 (DCPG) are G3. GTP-binding positions include 82–86 (DCPGH) and 137–140 (NKCD). Residues 137–140 (NKCD) are G4. The interval 175–177 (SAL) is G5.

The protein belongs to the TRAFAC class translation factor GTPase superfamily. Classic translation factor GTPase family. EF-Tu/EF-1A subfamily. Monomer.

The protein localises to the cytoplasm. It carries out the reaction GTP + H2O = GDP + phosphate + H(+). Functionally, GTP hydrolase that promotes the GTP-dependent binding of aminoacyl-tRNA to the A-site of ribosomes during protein biosynthesis. This Bacillus pumilus (strain SAFR-032) protein is Elongation factor Tu.